The chain runs to 872 residues: Alanine--tRNA ligase (872 aa).

Residues H571, H575, C674, and H678 each contribute to the Zn(2+) site.

The protein belongs to the class-II aminoacyl-tRNA synthetase family. Zn(2+) is required as a cofactor.

It is found in the cytoplasm. The catalysed reaction is tRNA(Ala) + L-alanine + ATP = L-alanyl-tRNA(Ala) + AMP + diphosphate. In terms of biological role, catalyzes the attachment of alanine to tRNA(Ala) in a two-step reaction: alanine is first activated by ATP to form Ala-AMP and then transferred to the acceptor end of tRNA(Ala). Also edits incorrectly charged Ser-tRNA(Ala) and Gly-tRNA(Ala) via its editing domain. The polypeptide is Alanine--tRNA ligase (Symbiobacterium thermophilum (strain DSM 24528 / JCM 14929 / IAM 14863 / T)).